Consider the following 759-residue polypeptide: Protein hunchback (759 aa).

2 disordered regions span residues 30-51 (EPGH…PIPS) and 171-215 (SSEK…EDMK). Polar residues predominate over residues 39–51 (SVASSPRQSPIPS). Thr-179 carries the post-translational modification Phosphothreonine. Residues Ser-189, Ser-208, Ser-210, and Ser-211 each carry the phosphoserine modification. Positions 199 to 215 (EPEKEHDQMSNSSEDMK) are enriched in basic and acidic residues. 4 consecutive C2H2-type zinc fingers follow at residues 241 to 263 (YKCK…TRTH), 270 to 292 (LQCP…IRKH), 298 to 320 (FQCD…RKSH), and 326 to 350 (YRCA…KYGH). Disordered regions lie at residues 366 to 419 (LVID…TSQL), 513 to 565 (QLQQ…PQQP), and 606 to 696 (MTSP…APAS). 2 stretches are compositionally biased toward low complexity: residues 399–419 (VAAV…TSQL) and 513–522 (QLQQQNQQQS). Acidic residues predominate over residues 523–532 (DNEEEEQDDE). Residues Ser-537 and Ser-540 each carry the phosphoserine modification. Residues 655 to 696 (ANTSASSTASSSGNSSNASSNGNSSSNSSSNGTSSAAAAPAS) are compositionally biased toward low complexity. 2 consecutive C2H2-type zinc fingers follow at residues 706 to 728 (YECK…MGYH) and 734 to 758 (FKCN…RNAH).

This sequence belongs to the hunchback C2H2-type zinc-finger protein family.

The protein localises to the nucleus. In terms of biological role, gap class segmentation protein that controls development of head structures. The protein is Protein hunchback of Drosophila yakuba (Fruit fly).